A 399-amino-acid polypeptide reads, in one-letter code: uncharacterized protein (399 aa).

WD repeat units lie at residues 59-99 (EHKD…QICQ), 102-141 (GHKD…EFIT), 144-185 (ETVD…QVMY), 187-227 (HTAP…PECR), 241-280 (ETAA…ILAS), 283-322 (AQTE…FRKS), 324-363 (PHEQ…LLGE), and 366-399 (GHQE…DCEH).

The protein localises to the cytoplasm. It is found in the nucleus. This is an uncharacterized protein from Schizosaccharomyces pombe (strain 972 / ATCC 24843) (Fission yeast).